Reading from the N-terminus, the 113-residue chain is Ribonuclease P protein component (113 aa).

It belongs to the RnpA family. As to quaternary structure, consists of a catalytic RNA component (M1 or rnpB) and a protein subunit.

The catalysed reaction is Endonucleolytic cleavage of RNA, removing 5'-extranucleotides from tRNA precursor.. Functionally, RNaseP catalyzes the removal of the 5'-leader sequence from pre-tRNA to produce the mature 5'-terminus. It can also cleave other RNA substrates such as 4.5S RNA. The protein component plays an auxiliary but essential role in vivo by binding to the 5'-leader sequence and broadening the substrate specificity of the ribozyme. This Geotalea uraniireducens (strain Rf4) (Geobacter uraniireducens) protein is Ribonuclease P protein component.